The primary structure comprises 205 residues: Thymidine kinase (205 aa).

ATP-binding positions include 9-16 (SAMNAGKS) and 87-90 (DECQ). Glutamate 88 serves as the catalytic Proton acceptor. 4 residues coordinate Zn(2+): cysteine 145, cysteine 147, cysteine 182, and histidine 185.

It belongs to the thymidine kinase family. Homotetramer.

It localises to the cytoplasm. It carries out the reaction thymidine + ATP = dTMP + ADP + H(+). This chain is Thymidine kinase, found in Shigella dysenteriae serotype 1 (strain Sd197).